Consider the following 213-residue polypeptide: Heat shock protein 30C (213 aa).

Over residues 61–80 (SKDTEMRRITDQNRQSRESE) the composition is skewed to basic and acidic residues. 2 disordered regions span residues 61-93 (SKDT…GKDH) and 174-213 (ALPP…QKVD). Residues 76–188 (SRESEGTSPN…PETPIPISMD (113 aa)) form the sHSP domain.

Belongs to the small heat shock protein (HSP20) family.

In Xenopus laevis (African clawed frog), this protein is Heat shock protein 30C (hsp30c).